The following is a 492-amino-acid chain: Heat shock factor protein 4 (492 aa).

Residues 17 to 121 (VPAFLGKLWA…QLLERVRRKV (105 aa)) mediate DNA binding. Positions 129 to 203 (GRWRPEDLGR…GPLQAGPSNA (75 aa)) are hydrophobic repeat HR-A/B. The tract at residues 245-322 (LPETNLGLSP…ECDFCVTAPP (78 aa)) is interactions with DUSP26, MAPK1 and MAPK2. Residues 246 to 285 (PETNLGLSPHRARGPIISDIPEDSPSPEGTRLSPSSDGRR) are disordered. A Glycyl lysine isopeptide (Lys-Gly) (interchain with G-Cter in SUMO) cross-link involves residue lysine 293. At serine 298 the chain carries Phosphoserine. Residues 337–400 (GSFSPEGPRN…PAGPLDVLGP (64 aa)) form a disordered region. Positions 364–389 (LGLESGDRSPESLLPPMLLQPPQESV) are hydrophobic repeat HR-C. A compositionally biased stretch (low complexity) spans 374–388 (ESLLPPMLLQPPQES).

Belongs to the HSF family. In terms of assembly, homotrimer. Exhibits constitutive DNA binding and forms trimers even in the absence of stress. Interacts with ALKBH4, DUSP26, MAPK1, MAPK2, MAPK8 and MAP kinase p38. In terms of processing, phosphorylated mainly on serine residues. Phosphorylation on Ser-298 promotes sumoylation on Lys-293. Isoform HSF4B is constitutively sumoylated. Sumoylation represses the transcriptional activity and is promoted by phosphorylation on Ser-298. HSFA is not sumoylated. As to expression, expressed in heart, skeletal muscle, eye and brain, and at much lower levels in some other tissues.

The protein localises to the nucleus. In terms of biological role, heat-shock transcription factor that specifically binds heat shock promoter elements (HSE). Required for denucleation and organelle rupture and degradation that occur during eye lens terminal differentiation, when fiber cells that compose the lens degrade all membrane-bound organelles in order to provide lens with transparency to allow the passage of light. In this process, may regulate denucleation of lens fiber cells in part by activating DNASE2B transcription. May be involved in DNA repair through the transcriptional regulation of RAD51. May up-regulate p53/TP53 protein in eye lens fiber cells, possibly through protein stabilization. In the eye lens, controls the expression of alpha-crystallin B chain/CRYAB and consequently may be involved in the regulation of lysosomal acidification. Its function is as follows. Transcriptional repressor. Transcriptional activator. The chain is Heat shock factor protein 4 (HSF4) from Homo sapiens (Human).